A 200-amino-acid chain; its full sequence is Glycerol-3-phosphate acyltransferase (200 aa).

5 helical membrane passes run 2 to 22, 51 to 71, 84 to 104, 114 to 134, and 159 to 179; these read FNIP…AVIV, KAAV…VLLA, AIAA…FFGF, LGVL…IWLV, and FFMP…LVLF.

Belongs to the PlsY family. As to quaternary structure, probably interacts with PlsX.

The protein localises to the cell inner membrane. The catalysed reaction is an acyl phosphate + sn-glycerol 3-phosphate = a 1-acyl-sn-glycero-3-phosphate + phosphate. The protein operates within lipid metabolism; phospholipid metabolism. Functionally, catalyzes the transfer of an acyl group from acyl-phosphate (acyl-PO(4)) to glycerol-3-phosphate (G3P) to form lysophosphatidic acid (LPA). This enzyme utilizes acyl-phosphate as fatty acyl donor, but not acyl-CoA or acyl-ACP. The protein is Glycerol-3-phosphate acyltransferase of Neisseria meningitidis serogroup C / serotype 2a (strain ATCC 700532 / DSM 15464 / FAM18).